Reading from the N-terminus, the 302-residue chain is Nucleotide-binding protein BceJ2315_08000 (302 aa).

8–15 (GISGSGKS) contributes to the ATP binding site. 57–60 (DARS) serves as a coordination point for GTP.

The protein belongs to the RapZ-like family.

Displays ATPase and GTPase activities. In Burkholderia cenocepacia (strain ATCC BAA-245 / DSM 16553 / LMG 16656 / NCTC 13227 / J2315 / CF5610) (Burkholderia cepacia (strain J2315)), this protein is Nucleotide-binding protein BceJ2315_08000.